A 1862-amino-acid chain; its full sequence is Transient receptor potential cation channel subfamily M member 7 (1862 aa).

At Met-1 the chain carries N-acetylmethionine. At 1–850 (MSQKSWIEST…ITRKFYAFYH (850 aa)) the chain is on the cytoplasmic side. Residue Ser-101 is modified to Phosphoserine. Residues 544-554 (NRRSGRNASSS) are compositionally biased toward low complexity. Residues 544-574 (NRRSGRNASSSTPQLRKSHETFGNRADKKEK) are disordered. A compositionally biased stretch (basic and acidic residues) spans 560-573 (KSHETFGNRADKKE). Residues 851–876 (APIVKFWFNTLAYLGFLMLYTFVVLV) traverse the membrane as a helical segment. At 877-882 (QMEQLP) the chain is on the extracellular side. The chain crosses the membrane as a helical span at residues 883-904 (SVQEWIVIAYIFTYAIEKIREV). The Cytoplasmic portion of the chain corresponds to 905–923 (FMSEAGKISQKIKVWFSDY). Residues 924 to 943 (FNVSDTIAIISFFVGFGLRF) traverse the membrane as a helical segment. The Extracellular segment spans residues 944 to 956 (GAKWNYINAYDNH). The helical transmembrane segment at 957–980 (VFVAGRLIYCLNIIFWYVRLLDFL) threads the bilayer. The Cytoplasmic portion of the chain corresponds to 981–999 (AVNQQAGPYVMMIGKMVAN). The chain crosses the membrane as a helical span at residues 1000-1023 (MFYIVVIMALVLLSFGVPRKAILY). Residues 1024–1025 (PH) are Extracellular-facing. An intramembrane region (pore-forming) is located at residues 1026 to 1066 (EEPSWSLAKDIVFHPYWMIFGEVYAYEIDVCANDSALPTIC). Residues 1067-1069 (GPG) lie on the Extracellular side of the membrane. A helical membrane pass occupies residues 1070–1098 (TWLTPFLQAVYLFVQYIIMVNLLIAFFNN). The Cytoplasmic segment spans residues 1099–1862 (VYLQVKAISN…EATNSVRLML (764 aa)). Residues Cys-1143, Cys-1144, and Cys-1146 are each lipidated (S-palmitoyl cysteine). Phosphothreonine is present on Thr-1163. 5 positions are modified to phosphoserine: Ser-1191, Ser-1193, Ser-1224, Ser-1255, and Ser-1258. Residues 1198–1250 (RVTFERVEQMSIQIKEVGDRVNYIKRSLQSLDSQIGHLQDLSALTVDTLKTLT) adopt a coiled-coil conformation. The residue at position 1265 (Thr-1265) is a Phosphothreonine. Ser-1300, Ser-1357, Ser-1360, Ser-1385, Ser-1386, Ser-1389, Ser-1394, Ser-1395, and Ser-1403 each carry phosphoserine. Residues 1380–1418 (NQKLGSSPNSSPHMSSPPTKFSVSTPSQPSCKSHLESTT) form a disordered region. Residues 1385–1397 (SSPNSSPHMSSPP) are compositionally biased toward low complexity. The segment covering 1398-1410 (TKFSVSTPSQPSC) has biased composition (polar residues). Residue Thr-1404 is modified to Phosphothreonine. 2 positions are modified to phosphoserine: Ser-1406 and Ser-1445. Thr-1454 bears the Phosphothreonine mark. Ser-1455 is modified (phosphoserine). Phosphothreonine is present on residues Thr-1466 and Thr-1470. The segment at 1485 to 1511 (TPTSLHSEQESCSRRASTEDSPDVDSR) is disordered. 5 positions are modified to phosphoserine: Ser-1491, Ser-1497, Ser-1501, Ser-1510, and Ser-1530. Positions 1491-1502 (SEQESCSRRAST) are enriched in basic and acidic residues. Residue Thr-1534 is modified to Phosphothreonine. Ser-1540 bears the Phosphoserine mark. Thr-1548 is modified (phosphothreonine). A phosphoserine mark is found at Ser-1564 and Ser-1566. Thr-1580 bears the Phosphothreonine mark. The Alpha-type protein kinase domain maps to 1591–1821 (ILNNSMSSWS…CCRKLKLPDL (231 aa)). Ser-1595 and Ser-1612 each carry phosphoserine. 5 residues coordinate ADP: Gly-1618, Gly-1619, Leu-1620, Arg-1621, and Lys-1645. The residue at position 1657 (Ser-1657) is a Phosphoserine. Phosphothreonine is present on Thr-1682. Glu-1717, Glu-1718, and Met-1720 together coordinate ADP. His-1750 lines the Zn(2+) pocket. Asp-1764 serves as the catalytic Proton acceptor. Asp-1774 is an ADP binding site. The residue at position 1776 (Ser-1776) is a Phosphoserine. His-1807, Cys-1809, and Cys-1813 together coordinate Zn(2+). Thr-1827 carries the post-translational modification Phosphothreonine. The tract at residues 1840–1862 (DLNLQAGNSTKESEATNSVRLML) is disordered. Residues Ser-1848 and Ser-1857 each carry the phosphoserine modification.

In the C-terminal section; belongs to the protein kinase superfamily. Alpha-type protein kinase family. ALPK subfamily. It in the N-terminal section; belongs to the transient receptor (TC 1.A.4) family. LTrpC subfamily. TRPM7 sub-subfamily. In terms of assembly, homodimer. Homotetramer. Forms heteromers with TRPM6; heteromeric channels are functionally different from the homomeric channels. Interacts with PLCB1. Requires Zn(2+) as cofactor. Post-translationally, palmitoylated; palmitoylation at Cys-1143, Cys-1144 and Cys-1146 promotes TRPM7 trafficking from the Golgi to the surface membrane. In terms of processing, autophosphorylated; autophosphorylation regulates TRPM7 kinase activity towards its substrates. The C-terminal kinase domain can be cleaved from the channel segment in a cell-type-specific fashion. TRPM7 is cleaved by caspase-8, dissociating the kinase from the ion-conducting pore. The cleaved kinase fragments (M7CKs) can translocate to the cell nucleus and binds chromatin-remodeling complex proteins in a Zn(2+)-dependent manner to ultimately phosphorylate specific Ser/Thr residues of histones.

It localises to the cell membrane. The protein localises to the cytoplasmic vesicle membrane. The protein resides in the nucleus. It catalyses the reaction L-seryl-[protein] + ATP = O-phospho-L-seryl-[protein] + ADP + H(+). The enzyme catalyses L-threonyl-[protein] + ATP = O-phospho-L-threonyl-[protein] + ADP + H(+). The catalysed reaction is Mg(2+)(in) = Mg(2+)(out). It carries out the reaction Ca(2+)(in) = Ca(2+)(out). It catalyses the reaction Zn(2+)(in) = Zn(2+)(out). Channel displays constitutive activity. Channel activity is negatively regulated by cytosolic Mg(2+), Mg-ATP, low intracellular pH. Resting free cytosolic Mg(2+) and Mg-ATP concentrations seem to be sufficient to block native TRPM7 channel activity. TRPM7 channel activity is highly dependent on membrane levels of phosphatidylinositol 4,5 bisphosphate (PIP2). PIP2 hydrolysis negatively regulates TRPM7 channel activity. TRPM7 kinase activity does not affect channel activity. The kinase activity is controlled through the autophosphorylation of a serine/threonine-rich region located N-terminal to the catalytic domain. Functionally, bifunctional protein that combines an ion channel with an intrinsic kinase domain, enabling it to modulate cellular functions either by conducting ions through the pore or by phosphorylating downstream proteins via its kinase domain. The channel is highly permeable to divalent cations, specifically calcium (Ca2+), magnesium (Mg2+) and zinc (Zn2+) and mediates their influx. Controls a wide range of biological processes such as Ca2(+), Mg(2+) and Zn(2+) homeostasis, vesicular Zn(2+) release channel and intracellular Ca(2+) signaling, embryonic development, immune responses, cell motility, proliferation and differentiation. The C-terminal alpha-kinase domain autophosphorylates cytoplasmic residues of TRPM7. TRPM7 phosphorylates SMAD2, suggesting that TRPM7 kinase may play a role in activating SMAD signaling pathways. In vitro, TRPM7 kinase phosphorylates ANXA1 (annexin A1), myosin II isoforms and a variety of proteins with diverse cellular functions. Its function is as follows. The cleaved channel exhibits substantially higher current and potentiates Fas receptor signaling. The C-terminal kinase domain can be cleaved from the channel segment in a cell-type-specific fashion. In immune cells, the TRPM7 kinase domain is clipped from the channel domain by caspases in response to Fas-receptor stimulation. The cleaved kinase fragments can translocate to the nucleus, and bind chromatin-remodeling complex proteins in a Zn(2+)-dependent manner to ultimately phosphorylate specific Ser/Thr residues of histones known to be functionally important for cell differentiation and embryonic development. The polypeptide is Transient receptor potential cation channel subfamily M member 7 (Rattus norvegicus (Rat)).